The primary structure comprises 366 residues: uncharacterized protein (366 aa).

6 helical membrane-spanning segments follow: residues 164–184 (IPLI…FADI), 188–208 (IVVG…RKLL), 223–243 (VFPI…IYSL), 256–276 (FIGE…LILM), 299–319 (FFCL…GEYL), and 325–345 (FIMF…LSVI).

The protein to A.fulgidus AF2058.

It is found in the cell membrane. This is an uncharacterized protein from Methanocaldococcus jannaschii (strain ATCC 43067 / DSM 2661 / JAL-1 / JCM 10045 / NBRC 100440) (Methanococcus jannaschii).